Reading from the N-terminus, the 148-residue chain is Large ribosomal subunit protein uL15 (148 aa).

The segment at 1–57 (MRLNDVKPQKGSKKRRRRVGRGISAGQGASAGLGMRGQKSRSGSGTRPGFEGGQQPL) is disordered. A compositionally biased stretch (basic residues) spans 10–20 (KGSKKRRRRVG). The span at 23–35 (ISAGQGASAGLGM) shows a compositional bias: gly residues.

It belongs to the universal ribosomal protein uL15 family. As to quaternary structure, part of the 50S ribosomal subunit.

Its function is as follows. Binds to the 23S rRNA. The sequence is that of Large ribosomal subunit protein uL15 from Trichormus variabilis (strain ATCC 29413 / PCC 7937) (Anabaena variabilis).